We begin with the raw amino-acid sequence, 267 residues long: Small ribosomal subunit protein uS2 (267 aa).

The disordered stretch occupies residues 222-267; sequence GKALRDQDSEEEIQNKEQDEVSQEEKDDILDEAMNEEDFEIPEDKE. Residues 223-240 show a composition bias toward basic and acidic residues; the sequence is KALRDQDSEEEIQNKEQD. Acidic residues predominate over residues 241-267; the sequence is EVSQEEKDDILDEAMNEEDFEIPEDKE.

It belongs to the universal ribosomal protein uS2 family.

The protein is Small ribosomal subunit protein uS2 of Campylobacter hominis (strain ATCC BAA-381 / DSM 21671 / CCUG 45161 / LMG 19568 / NCTC 13146 / CH001A).